We begin with the raw amino-acid sequence, 235 residues long: Fibrillarin-like rRNA/tRNA 2'-O-methyltransferase (235 aa).

Residues 91–92, 110–111, 137–138, and 157–160 each bind S-adenosyl-L-methionine; these read TT, EF, DA, and DVAQ.

Belongs to the methyltransferase superfamily. Fibrillarin family. In terms of assembly, interacts with nop5. Component of box C/D small ribonucleoprotein (sRNP) particles that contain rpl7ae, FlpA and nop5, plus a guide RNA.

Functionally, involved in pre-rRNA and tRNA processing. Utilizes the methyl donor S-adenosyl-L-methionine to catalyze the site-specific 2'-hydroxyl methylation of ribose moieties in rRNA and tRNA. Site specificity is provided by a guide RNA that base pairs with the substrate. Methylation occurs at a characteristic distance from the sequence involved in base pairing with the guide RNA. This chain is Fibrillarin-like rRNA/tRNA 2'-O-methyltransferase, found in Pyrobaculum neutrophilum (strain DSM 2338 / JCM 9278 / NBRC 100436 / V24Sta) (Thermoproteus neutrophilus).